A 494-amino-acid chain; its full sequence is UDP-glucose 6-dehydrogenase (494 aa).

NAD(+)-binding positions include 11–16, aspartate 36, arginine 41, and 89–93; these read GAGYVG and VNTPT. The tract at residues 88-110 is disordered; it reads SVNTPTKTYGMGKGRAADLKYIE. N6-acetyllysine is present on lysine 107. The tract at residues 129–135 is allosteric switch region; it reads KSTVPVR. 130 to 132 serves as a coordination point for NAD(+); that stretch reads STV. The Proton donor/acceptor role is filled by glutamate 161. Residues 161 to 165, 220 to 224, arginine 260, and 267 to 273 contribute to the substrate site; these read EFLAE, KLAAN, and KASVGFG. Residue glutamate 165 participates in NAD(+) binding. Catalysis depends on lysine 220, which acts as the Proton donor/acceptor. Cysteine 276 (nucleophile) is an active-site residue. 276-279 is a binding site for NAD(+); it reads CFQK. Residues 321-325 are important for formation of active hexamer structure; that stretch reads SLFNT. 338–339 lines the substrate pocket; that stretch reads FK. Residue arginine 346 participates in NAD(+) binding. Substrate is bound at residue arginine 442. The segment at 466–494 is disordered; it reads VSSKRIPYAPSGEIPKFSLQDPPNKKPKV. Residue serine 476 is modified to Phosphoserine.

Belongs to the UDP-glucose/GDP-mannose dehydrogenase family. In terms of assembly, homohexamer.

It catalyses the reaction UDP-alpha-D-glucose + 2 NAD(+) + H2O = UDP-alpha-D-glucuronate + 2 NADH + 3 H(+). Its pathway is nucleotide-sugar biosynthesis; UDP-alpha-D-glucuronate biosynthesis; UDP-alpha-D-glucuronate from UDP-alpha-D-glucose: step 1/1. Its activity is regulated as follows. UDP-alpha-D-xylose (UDX) acts as a feedback inhibitor. It binds at the same site as the substrate, but functions as allosteric inhibitor by triggering a conformation change that disrupts the active hexameric ring structure and gives rise to an inactive, horseshoe-shaped hexamer. Catalyzes the formation of UDP-alpha-D-glucuronate, a constituent of complex glycosaminoglycans. Required for the biosynthesis of chondroitin sulfate and heparan sulfate. Required for embryonic development via its role in the biosynthesis of glycosaminoglycans. Required for proper brain and neuronal development. The chain is UDP-glucose 6-dehydrogenase (UGDH) from Pongo abelii (Sumatran orangutan).